The chain runs to 804 residues: Endoplasmin (804 aa).

Positions 1-21 are cleaved as a signal peptide; the sequence is MRALWVLGLCCVLLTFGSVRA. The short motif at 42–44 is the SRT pseudosubstrate motif element; the sequence is SRT. N62 carries an N-linked (GlcNAc...) asparagine glycan. S64 bears the Phosphoserine mark. A glycan (N-linked (GlcNAc...) asparagine) is linked at N107. ATP contacts are provided by N107, D149, and N162. Position 168 is an N6-(2-hydroxyisobutyryl)lysine (K168). A Phosphoserine modification is found at S172. F199 provides a ligand contact to ATP. N217 carries an N-linked (GlcNAc...) asparagine glycan. A disordered region spans residues 288–323; the sequence is TVEEPMEEEEAAKEEKEESDDEAAVEEEEEEKKPKT. Residues 289–317 show a composition bias toward acidic residues; that stretch reads VEEPMEEEEAAKEEKEESDDEAAVEEEEE. Phosphoserine is present on residues S306 and S403. Residue K404 is modified to N6-succinyllysine. A glycan (N-linked (GlcNAc...) asparagine) is linked at N445. The residue at position 447 (S447) is a Phosphoserine. An N6-acetyllysine modification is found at K479. N481 and N502 each carry an N-linked (GlcNAc...) asparagine glycan. K633 bears the N6-succinyllysine mark. Residues 750 to 804 are disordered; it reads DPDAKVEEEPEEEPEETTEDTTEDTEQDEDEEMDVGTDEEEQETAKESTAEKDEL. The segment covering 757–791 has biased composition (acidic residues); that stretch reads EEPEEEPEETTEDTTEDTEQDEDEEMDVGTDEEEQ. The residue at position 786 (T786) is a Phosphothreonine. The span at 792–804 shows a compositional bias: basic and acidic residues; that stretch reads ETAKESTAEKDEL. The short motif at 801 to 804 is the Prevents secretion from ER element; that stretch reads KDEL.

This sequence belongs to the heat shock protein 90 family. As to quaternary structure, homodimer; disulfide-linked. Component of an EIF2 complex at least composed of CELF1/CUGBP1, CALR, CALR3, EIF2S1, EIF2S2, HSP90B1 and HSPA5. Part of a large chaperone multiprotein complex comprising DNAJB11, HSP90B1, HSPA5, HYOU, PDIA2, PDIA4, PDIA6, PPIB, SDF2L1, UGGT1 and very small amounts of ERP29, but not, or at very low levels, CALR nor CANX. Interacts with AIMP1; regulates its retention in the endoplasmic reticulum. Hyperglycosylated form interacts with OS9; promoting its degradation by the endoplasmic reticulum associated degradation (ERAD). Interacts with CNPY3. This interaction is disrupted in the presence of ATP. Interacts with TLR4 and TLR9, but not with TLR3. Interacts with MZB1 in a calcium-dependent manner. Interacts with METTL23. Interacts with IL1B; the interaction facilitates cargo translocation into the ERGIC. Interacts with EIF2AK3. In terms of processing, phosphorylated by CK2. Post-translationally, N-glycosylated cotranslationally at Asn-217 by STT3A-containing OST-A complex: this glycosylation is constitutive. In response to various stress, 5 additional facultative sites (Asn-62, Asn-107, Asn-445, Asn-481 and Asn-502) can be glycosylated post-translationally by STT3B-containing OST-B complex, leading to a hyperglycosylated form that is degraded by the ER-associated degradation (ERAD) pathway. In normal conditions, the OST-A complex together with CCDC134 prevent glycosylation at facultative sites during protein folding, thereby preventing hyperglycosylation. Mechanistically, nascent HSP90B1 is tethered during translation to a specialized CCDC134-containing translocon that forms a microenvironment for its folding, in which STT3A associates with the SRT pseudosubstrate motif, and prevents access to facultative glycosylation sites until folding is completed, rendering its facultative sites inaccessible to the OST-B complex.

It is found in the endoplasmic reticulum lumen. The protein localises to the sarcoplasmic reticulum lumen. Its subcellular location is the melanosome. It catalyses the reaction ATP + H2O = ADP + phosphate + H(+). In terms of biological role, ATP-dependent chaperone involved in the processing of proteins in the endoplasmic reticulum, regulating their transport. Together with MESD, acts as a modulator of the Wnt pathway by promoting the folding of LRP6, a coreceptor of the canonical Wnt pathway. When associated with CNPY3, required for proper folding of Toll-like receptors. Promotes folding and trafficking of TLR4 to the cell surface. May participate in the unfolding of cytosolic leaderless cargos (lacking the secretion signal sequence) such as the interleukin 1/IL-1 to facilitate their translocation into the ERGIC (endoplasmic reticulum-Golgi intermediate compartment) and secretion; the translocation process is mediated by the cargo receptor TMED10. The sequence is that of Endoplasmin (HSP90B1) from Pongo abelii (Sumatran orangutan).